A 122-amino-acid chain; its full sequence is Large ribosomal subunit protein uL14 (122 aa).

It belongs to the universal ribosomal protein uL14 family. In terms of assembly, part of the 50S ribosomal subunit. Forms a cluster with proteins L3 and L19. In the 70S ribosome, L14 and L19 interact and together make contacts with the 16S rRNA in bridges B5 and B8.

Binds to 23S rRNA. Forms part of two intersubunit bridges in the 70S ribosome. This chain is Large ribosomal subunit protein uL14, found in Ureaplasma parvum serovar 3 (strain ATCC 27815 / 27 / NCTC 11736).